The chain runs to 202 residues: Translation initiation factor IF-3 (202 aa).

Belongs to the IF-3 family. Monomer.

Its subcellular location is the cytoplasm. IF-3 binds to the 30S ribosomal subunit and shifts the equilibrium between 70S ribosomes and their 50S and 30S subunits in favor of the free subunits, thus enhancing the availability of 30S subunits on which protein synthesis initiation begins. The polypeptide is Translation initiation factor IF-3 (Prochlorococcus marinus (strain NATL2A)).